We begin with the raw amino-acid sequence, 255 residues long: Proteasome subunit alpha 2 (255 aa).

A disordered region spans residues 229 to 255; it reads AGSSLEEMLPTPAATEDAPPANGDAPS. The span at 238–249 shows a compositional bias: low complexity; sequence PTPAATEDAPPA.

It belongs to the peptidase T1A family. In terms of assembly, the 20S proteasome core is composed of 14 alpha and 14 beta subunits that assemble into four stacked heptameric rings, resulting in a barrel-shaped structure. The two inner rings, each composed of seven catalytic beta subunits, are sandwiched by two outer rings, each composed of seven alpha subunits. All four combinations of alpha- and beta-subunits (beta2-alpha1, beta2-alpha2, beta1-alpha2 and beta1-alpha1) yield fully assembled and proteolytically active proteasomes. The catalytic chamber with the active sites is on the inside of the barrel. Has probably a gated structure, the ends of the cylinder being occluded by the N-termini of the alpha-subunits. Is likely capped by the proteasome-associated ATPase, ARC. The N-terminus is blocked.

The protein resides in the cytoplasm. The protein operates within protein degradation; proteasomal Pup-dependent pathway. With respect to regulation, the formation of the proteasomal ATPase ARC-20S proteasome complex, likely via the docking of the C-termini of ARC into the intersubunit pockets in the alpha-rings, may trigger opening of the gate for substrate entry. Interconversion between the open-gate and close-gate conformations leads to a dynamic regulation of the 20S proteasome proteolysis activity. Its function is as follows. Component of the proteasome core, a large protease complex with broad specificity involved in protein degradation. The R.erythropolis proteasomes are able to cleave oligopeptides after Tyr, Phe and Leu, very poorly after Arg but not after Glu. Thus, displays chymotrypsin-like activity, low trypsin-like activity but no caspase-like activity. The polypeptide is Proteasome subunit alpha 2 (Rhodococcus erythropolis (Arthrobacter picolinophilus)).